We begin with the raw amino-acid sequence, 696 residues long: Glycine--tRNA ligase beta subunit (696 aa).

This sequence belongs to the class-II aminoacyl-tRNA synthetase family. In terms of assembly, tetramer of two alpha and two beta subunits.

The protein resides in the cytoplasm. It carries out the reaction tRNA(Gly) + glycine + ATP = glycyl-tRNA(Gly) + AMP + diphosphate. In Aromatoleum aromaticum (strain DSM 19018 / LMG 30748 / EbN1) (Azoarcus sp. (strain EbN1)), this protein is Glycine--tRNA ligase beta subunit.